We begin with the raw amino-acid sequence, 291 residues long: ATP synthase gamma chain (291 aa).

This sequence belongs to the ATPase gamma chain family. In terms of assembly, F-type ATPases have 2 components, CF(1) - the catalytic core - and CF(0) - the membrane proton channel. CF(1) has five subunits: alpha(3), beta(3), gamma(1), delta(1), epsilon(1). CF(0) has three main subunits: a, b and c.

The protein localises to the cell inner membrane. Its function is as follows. Produces ATP from ADP in the presence of a proton gradient across the membrane. The gamma chain is believed to be important in regulating ATPase activity and the flow of protons through the CF(0) complex. This chain is ATP synthase gamma chain, found in Ruegeria sp. (strain TM1040) (Silicibacter sp.).